A 2455-amino-acid polypeptide reads, in one-letter code: Ectopic P granules protein 5 homolog (2455 aa).

A disordered region spans residues 1 to 42 (MATLEKPKKEKSKKSRNRVPIEKEEEEPAELSTSEEQRPAEN). At Ser-44 the chain carries Phosphoserine. Positions 77–105 (VTSQEPEGTQEPTETEAQPSAPSAPPSTT) are disordered. Over residues 80-97 (QEPEGTQEPTETEAQPSA) the composition is skewed to low complexity. Position 467 is a phosphoserine (Ser-467).

Belongs to the EPG5 family.

The protein resides in the cytoplasm. The protein localises to the perinuclear region. It is found in the lysosome. Functionally, involved in autophagy. Plays a role in late steps of autophagy. In Drosophila melanogaster (Fruit fly), this protein is Ectopic P granules protein 5 homolog.